The primary structure comprises 132 residues: Small ribosomal subunit protein uS8 (132 aa).

It belongs to the universal ribosomal protein uS8 family. Part of the 30S ribosomal subunit. Contacts proteins S5 and S12.

One of the primary rRNA binding proteins, it binds directly to 16S rRNA central domain where it helps coordinate assembly of the platform of the 30S subunit. This Stenotrophomonas maltophilia (strain K279a) protein is Small ribosomal subunit protein uS8.